We begin with the raw amino-acid sequence, 120 residues long: NAD(P)H-quinone oxidoreductase subunit 3, chloroplastic (120 aa).

Helical transmembrane passes span 9–29 (IFWA…LISG), 64–84 (MFAL…PWAM), and 88–108 (VLGV…IVGS).

The protein belongs to the complex I subunit 3 family. In terms of assembly, NDH is composed of at least 16 different subunits, 5 of which are encoded in the nucleus.

Its subcellular location is the plastid. It is found in the chloroplast thylakoid membrane. It catalyses the reaction a plastoquinone + NADH + (n+1) H(+)(in) = a plastoquinol + NAD(+) + n H(+)(out). The enzyme catalyses a plastoquinone + NADPH + (n+1) H(+)(in) = a plastoquinol + NADP(+) + n H(+)(out). Functionally, NDH shuttles electrons from NAD(P)H:plastoquinone, via FMN and iron-sulfur (Fe-S) centers, to quinones in the photosynthetic chain and possibly in a chloroplast respiratory chain. The immediate electron acceptor for the enzyme in this species is believed to be plastoquinone. Couples the redox reaction to proton translocation, and thus conserves the redox energy in a proton gradient. The sequence is that of NAD(P)H-quinone oxidoreductase subunit 3, chloroplastic from Gossypium barbadense (Sea Island cotton).